The primary structure comprises 426 residues: Interferon regulatory factor 8 (426 aa).

Residues 7-114 (GRRLRQWLIE…EPYKVYRIVP (108 aa)) constitute a DNA-binding region (IRF tryptophan pentad repeat).

It belongs to the IRF family. Interacts (via C-terminus) with TRIM21 (via C-terminus). Interacts with the BATF-JUNB heterodimer. Interacts with BATF (via bZIP domain); the interaction is direct. Interacts with COPS2. Interacts with SPI1. Post-translationally, ubiquitinated. Ubiquitination by TRIM21 in macrophages, a process that is strongly increased upon interferon gamma stimulation, leds to the enhanced transcriptional activity of target cytokine genes. Ubiquitination leads to its degradation by the proteasome. In terms of processing, sumoylated with SUMO3. Desumoylated by SENP1. In terms of tissue distribution, predominantly expressed in lymphoid tissues.

Its subcellular location is the nucleus. The protein localises to the cytoplasm. Its function is as follows. Transcription factor that specifically binds to the upstream regulatory region of type I interferon (IFN) and IFN-inducible MHC class I genes (the interferon consensus sequence (ICS)). Can both act as a transcriptional activator or repressor. Plays a negative regulatory role in cells of the immune system. Involved in CD8(+) dendritic cell differentiation by forming a complex with the BATF-JUNB heterodimer in immune cells, leading to recognition of AICE sequence (5'-TGAnTCA/GAAA-3'), an immune-specific regulatory element, followed by cooperative binding of BATF and IRF8 and activation of genes. Required for the development of plasmacytoid dendritic cells (pDCs), which produce most of the type I IFN in response to viral infection. Positively regulates macroautophagy in dendritic cells. Acts as a transcriptional repressor of osteoclast differentiation factors such as NFATC1 and EEIG1. The sequence is that of Interferon regulatory factor 8 from Homo sapiens (Human).